We begin with the raw amino-acid sequence, 157 residues long: Probable cyclic pyranopterin monophosphate synthase (157 aa).

Substrate is bound by residues 75 to 77 (MCH) and 111 to 112 (ME). Residue Asp-126 is part of the active site.

Belongs to the MoaC family. Homohexamer; trimer of dimers.

It catalyses the reaction (8S)-3',8-cyclo-7,8-dihydroguanosine 5'-triphosphate = cyclic pyranopterin phosphate + diphosphate. Its pathway is cofactor biosynthesis; molybdopterin biosynthesis. Catalyzes the conversion of (8S)-3',8-cyclo-7,8-dihydroguanosine 5'-triphosphate to cyclic pyranopterin monophosphate (cPMP). The polypeptide is Probable cyclic pyranopterin monophosphate synthase (Methanosarcina mazei (strain ATCC BAA-159 / DSM 3647 / Goe1 / Go1 / JCM 11833 / OCM 88) (Methanosarcina frisia)).